Consider the following 365-residue polypeptide: Chorismate synthase (365 aa).

2 residues coordinate NADP(+): Arg-48 and Arg-54. Residues 129–131 (RSS), 241–242 (NA), Gly-285, 300–304 (KPTSS), and Arg-326 each bind FMN.

This sequence belongs to the chorismate synthase family. As to quaternary structure, homotetramer. FMNH2 is required as a cofactor.

The catalysed reaction is 5-O-(1-carboxyvinyl)-3-phosphoshikimate = chorismate + phosphate. It functions in the pathway metabolic intermediate biosynthesis; chorismate biosynthesis; chorismate from D-erythrose 4-phosphate and phosphoenolpyruvate: step 7/7. In terms of biological role, catalyzes the anti-1,4-elimination of the C-3 phosphate and the C-6 proR hydrogen from 5-enolpyruvylshikimate-3-phosphate (EPSP) to yield chorismate, which is the branch point compound that serves as the starting substrate for the three terminal pathways of aromatic amino acid biosynthesis. This reaction introduces a second double bond into the aromatic ring system. The chain is Chorismate synthase from Parvibaculum lavamentivorans (strain DS-1 / DSM 13023 / NCIMB 13966).